We begin with the raw amino-acid sequence, 876 residues long: Phosphoenolpyruvate carboxylase (876 aa).

Catalysis depends on residues His138 and Lys543.

This sequence belongs to the PEPCase type 1 family. It depends on Mg(2+) as a cofactor.

It carries out the reaction oxaloacetate + phosphate = phosphoenolpyruvate + hydrogencarbonate. Functionally, forms oxaloacetate, a four-carbon dicarboxylic acid source for the tricarboxylic acid cycle. In Pseudomonas fluorescens (strain Pf0-1), this protein is Phosphoenolpyruvate carboxylase.